The sequence spans 504 residues: Probable cytosol aminopeptidase (504 aa).

K276 and D281 together coordinate Mn(2+). K288 is an active-site residue. 3 residues coordinate Mn(2+): D299, D358, and E360. R362 is an active-site residue.

This sequence belongs to the peptidase M17 family. Mn(2+) serves as cofactor.

Its subcellular location is the cytoplasm. It catalyses the reaction Release of an N-terminal amino acid, Xaa-|-Yaa-, in which Xaa is preferably Leu, but may be other amino acids including Pro although not Arg or Lys, and Yaa may be Pro. Amino acid amides and methyl esters are also readily hydrolyzed, but rates on arylamides are exceedingly low.. The catalysed reaction is Release of an N-terminal amino acid, preferentially leucine, but not glutamic or aspartic acids.. Functionally, presumably involved in the processing and regular turnover of intracellular proteins. Catalyzes the removal of unsubstituted N-terminal amino acids from various peptides. The protein is Probable cytosol aminopeptidase of Bordetella avium (strain 197N).